We begin with the raw amino-acid sequence, 551 residues long: Protein GZF3 (551 aa).

Positions 17–43 are disordered; that stretch reads DNVFEPKSSENLNSLNQSEEEGHIGRW. The segment at 131 to 155 adopts a GATA-type zinc-finger fold; that stretch reads CKNCLTSTTPLWRRDEHGAMLCNAC. Disordered regions lie at residues 212–260, 379–400, and 467–490; these read GRKA…SATK, LAPTSSRTTDSNPSEVPNQIRS, and SISNSVSSSDVSGRKFENHPAKDL. The span at 228 to 239 shows a compositional bias: polar residues; it reads SQLLMGTSSTAK. The segment covering 244–254 has biased composition (basic and acidic residues); it reads PKTESKERSDS. A compositionally biased stretch (polar residues) spans 388 to 400; sequence DSNPSEVPNQIRS. Low complexity predominate over residues 467–477; that stretch reads SISNSVSSSDV. The span at 478 to 490 shows a compositional bias: basic and acidic residues; it reads SGRKFENHPAKDL.

It is found in the nucleus. This Saccharomyces cerevisiae (strain ATCC 204508 / S288c) (Baker's yeast) protein is Protein GZF3 (GZF3).